The following is a 116-amino-acid chain: Protein aq_1857 (116 aa).

It belongs to the HesB/IscA family.

The polypeptide is Protein aq_1857 (Aquifex aeolicus (strain VF5)).